Here is a 162-residue protein sequence, read N- to C-terminus: Large ribosomal subunit protein uL30 (162 aa).

Belongs to the universal ribosomal protein uL30 family. As to quaternary structure, part of the 50S ribosomal subunit.

This chain is Large ribosomal subunit protein uL30, found in Desulfurococcus amylolyticus (strain DSM 18924 / JCM 16383 / VKM B-2413 / 1221n) (Desulfurococcus kamchatkensis).